A 351-amino-acid chain; its full sequence is Small ribosomal subunit biogenesis GTPase RsgA (351 aa).

A CP-type G domain is found at 107–277; it reads ENLLQRPDNF…LIDSPGIREF (171 aa). GTP is bound by residues 163–166 and 219–227; these read NKTD and GQSGVGKSS. Positions 301, 306, 308, and 314 each coordinate Zn(2+).

Belongs to the TRAFAC class YlqF/YawG GTPase family. RsgA subfamily. As to quaternary structure, monomer. Associates with 30S ribosomal subunit, binds 16S rRNA. Zn(2+) serves as cofactor.

The protein localises to the cytoplasm. Functionally, one of several proteins that assist in the late maturation steps of the functional core of the 30S ribosomal subunit. Helps release RbfA from mature subunits. May play a role in the assembly of ribosomal proteins into the subunit. Circularly permuted GTPase that catalyzes slow GTP hydrolysis, GTPase activity is stimulated by the 30S ribosomal subunit. This Marinobacter nauticus (strain ATCC 700491 / DSM 11845 / VT8) (Marinobacter aquaeolei) protein is Small ribosomal subunit biogenesis GTPase RsgA.